A 106-amino-acid polypeptide reads, in one-letter code: UPF0145 protein PSEEN3024 (106 aa).

Belongs to the UPF0145 family.

This is UPF0145 protein PSEEN3024 from Pseudomonas entomophila (strain L48).